A 259-amino-acid chain; its full sequence is Transcription factor bHLH80 (259 aa).

The disordered stretch occupies residues 1–25; it reads MQSTHISGGSSGGGGGGGGEVSRSG. Over residues 9-20 the composition is skewed to gly residues; the sequence is GSSGGGGGGGGE. The bHLH domain maps to 187 to 237; the sequence is CATHPRSIAERVRRTRISDRIRRLQELVPNMDKQTNTADMLEEAVEYVKAL.

As to quaternary structure, homodimer. As to expression, expressed constitutively in roots, leaves, stems, and flowers.

It localises to the nucleus. The polypeptide is Transcription factor bHLH80 (BHLH80) (Arabidopsis thaliana (Mouse-ear cress)).